Reading from the N-terminus, the 489-residue chain is Glutamate--tRNA ligase (489 aa).

The 'HIGH' region signature appears at 12–22 (PSPTGIPHVGM). Residues 256–260 (KLSKR) carry the 'KMSKS' region motif. Lysine 259 contributes to the ATP binding site.

The protein belongs to the class-I aminoacyl-tRNA synthetase family. Glutamate--tRNA ligase type 1 subfamily. In terms of assembly, monomer.

Its subcellular location is the cytoplasm. It carries out the reaction tRNA(Glu) + L-glutamate + ATP = L-glutamyl-tRNA(Glu) + AMP + diphosphate. Catalyzes the attachment of glutamate to tRNA(Glu) in a two-step reaction: glutamate is first activated by ATP to form Glu-AMP and then transferred to the acceptor end of tRNA(Glu). In Mycobacterium ulcerans (strain Agy99), this protein is Glutamate--tRNA ligase.